The sequence spans 120 residues: uncharacterized protein (120 aa).

The N-terminal stretch at methionine 1 to alanine 18 is a signal peptide. The interval alanine 20 to leucine 99 is disordered.

This is an uncharacterized protein from Caenorhabditis elegans.